A 338-amino-acid polypeptide reads, in one-letter code: Ketol-acid reductoisomerase (NADP(+)) (338 aa).

Residues 1–181 (MNVYYDRDCD…GGGRTGIIET (181 aa)) enclose the KARI N-terminal Rossmann domain. NADP(+) contacts are provided by residues 24–27 (YGSQ), Arg-47, Ser-50, Ser-52, and 82–85 (DEFQ). The active site involves His-107. Residue Gly-133 participates in NADP(+) binding. The region spanning 182-327 (TFKDETETDL…GNLRAMMPWI (146 aa)) is the KARI C-terminal knotted domain. Mg(2+)-binding residues include Asp-190, Glu-194, Glu-226, and Glu-230. Substrate is bound at residue Ser-251.

This sequence belongs to the ketol-acid reductoisomerase family. It depends on Mg(2+) as a cofactor.

It catalyses the reaction (2R)-2,3-dihydroxy-3-methylbutanoate + NADP(+) = (2S)-2-acetolactate + NADPH + H(+). It carries out the reaction (2R,3R)-2,3-dihydroxy-3-methylpentanoate + NADP(+) = (S)-2-ethyl-2-hydroxy-3-oxobutanoate + NADPH + H(+). It participates in amino-acid biosynthesis; L-isoleucine biosynthesis; L-isoleucine from 2-oxobutanoate: step 2/4. Its pathway is amino-acid biosynthesis; L-valine biosynthesis; L-valine from pyruvate: step 2/4. In terms of biological role, involved in the biosynthesis of branched-chain amino acids (BCAA). Catalyzes an alkyl-migration followed by a ketol-acid reduction of (S)-2-acetolactate (S2AL) to yield (R)-2,3-dihydroxy-isovalerate. In the isomerase reaction, S2AL is rearranged via a Mg-dependent methyl migration to produce 3-hydroxy-3-methyl-2-ketobutyrate (HMKB). In the reductase reaction, this 2-ketoacid undergoes a metal-dependent reduction by NADPH to yield (R)-2,3-dihydroxy-isovalerate. This Trichlorobacter lovleyi (strain ATCC BAA-1151 / DSM 17278 / SZ) (Geobacter lovleyi) protein is Ketol-acid reductoisomerase (NADP(+)).